We begin with the raw amino-acid sequence, 224 residues long: Deoxyribose-phosphate aldolase (224 aa).

D92 functions as the Proton donor/acceptor in the catalytic mechanism. K155 acts as the Schiff-base intermediate with acetaldehyde in catalysis. Catalysis depends on K184, which acts as the Proton donor/acceptor.

Belongs to the DeoC/FbaB aldolase family. DeoC type 1 subfamily.

The protein resides in the cytoplasm. It carries out the reaction 2-deoxy-D-ribose 5-phosphate = D-glyceraldehyde 3-phosphate + acetaldehyde. It functions in the pathway carbohydrate degradation; 2-deoxy-D-ribose 1-phosphate degradation; D-glyceraldehyde 3-phosphate and acetaldehyde from 2-deoxy-alpha-D-ribose 1-phosphate: step 2/2. In terms of biological role, catalyzes a reversible aldol reaction between acetaldehyde and D-glyceraldehyde 3-phosphate to generate 2-deoxy-D-ribose 5-phosphate. This is Deoxyribose-phosphate aldolase from Halalkalibacterium halodurans (strain ATCC BAA-125 / DSM 18197 / FERM 7344 / JCM 9153 / C-125) (Bacillus halodurans).